A 378-amino-acid chain; its full sequence is Glutamate 5-kinase (378 aa).

K20 serves as a coordination point for ATP. 3 residues coordinate substrate: S60, D147, and N159. ATP-binding positions include 179-180 and 221-227; these read TD and TGGMLTK. The 79-residue stretch at 286–364 folds into the PUA domain; that stretch reads RGRVVLDDGA…SQIARILGSM (79 aa).

Belongs to the glutamate 5-kinase family.

The protein localises to the cytoplasm. It carries out the reaction L-glutamate + ATP = L-glutamyl 5-phosphate + ADP. The protein operates within amino-acid biosynthesis; L-proline biosynthesis; L-glutamate 5-semialdehyde from L-glutamate: step 1/2. Functionally, catalyzes the transfer of a phosphate group to glutamate to form L-glutamate 5-phosphate. The protein is Glutamate 5-kinase of Bordetella parapertussis (strain 12822 / ATCC BAA-587 / NCTC 13253).